The chain runs to 413 residues: NPL4-like protein 1 (413 aa).

Ser104 carries the phosphoserine modification. Residues 131 to 272 (SVSFDRDCAN…ADVHFEPFQM (142 aa)) form the MPN domain.

Belongs to the NPL4 family.

It participates in protein degradation; proteasomal ubiquitin-dependent pathway. May be part of a complex that binds ubiquitinated proteins and that is necessary for the export of misfolded proteins from the ER to the cytoplasm, where they are degraded by the proteasome. The chain is NPL4-like protein 1 from Arabidopsis thaliana (Mouse-ear cress).